The following is a 351-amino-acid chain: Histidinol-phosphate aminotransferase (351 aa).

An N6-(pyridoxal phosphate)lysine modification is found at Lys214.

This sequence belongs to the class-II pyridoxal-phosphate-dependent aminotransferase family. Histidinol-phosphate aminotransferase subfamily. Requires pyridoxal 5'-phosphate as cofactor.

The enzyme catalyses L-histidinol phosphate + 2-oxoglutarate = 3-(imidazol-4-yl)-2-oxopropyl phosphate + L-glutamate. It participates in amino-acid biosynthesis; L-histidine biosynthesis; L-histidine from 5-phospho-alpha-D-ribose 1-diphosphate: step 7/9. The chain is Histidinol-phosphate aminotransferase from Methanosphaerula palustris (strain ATCC BAA-1556 / DSM 19958 / E1-9c).